The sequence spans 742 residues: 5-methyltetrahydropteroyltriglutamate--homocysteine methyltransferase (742 aa).

5-methyltetrahydropteroyltri-L-glutamate contacts are provided by residues 18–21 (REWK) and K112. L-homocysteine-binding positions include 420–422 (IGS) and E473. L-methionine is bound by residues 420–422 (IGS) and E473. W550 is a binding site for 5-methyltetrahydropteroyltri-L-glutamate. Residue D588 coordinates L-homocysteine. D588 contributes to the L-methionine binding site. A 5-methyltetrahydropteroyltri-L-glutamate-binding site is contributed by E594. Residues H630, C632, and E654 each contribute to the Zn(2+) site. H683 (proton donor) is an active-site residue. C715 contributes to the Zn(2+) binding site.

This sequence belongs to the vitamin-B12 independent methionine synthase family. It depends on Zn(2+) as a cofactor.

It carries out the reaction 5-methyltetrahydropteroyltri-L-glutamate + L-homocysteine = tetrahydropteroyltri-L-glutamate + L-methionine. It functions in the pathway amino-acid biosynthesis; L-methionine biosynthesis via de novo pathway; L-methionine from L-homocysteine (MetE route): step 1/1. Its function is as follows. Catalyzes the transfer of a methyl group from 5-methyltetrahydrofolate to homocysteine resulting in methionine formation. The polypeptide is 5-methyltetrahydropteroyltriglutamate--homocysteine methyltransferase (Staphylococcus aureus (strain bovine RF122 / ET3-1)).